A 402-amino-acid chain; its full sequence is UPF0261 protein mll9388 (402 aa).

It belongs to the UPF0261 family.

In Mesorhizobium japonicum (strain LMG 29417 / CECT 9101 / MAFF 303099) (Mesorhizobium loti (strain MAFF 303099)), this protein is UPF0261 protein mll9388.